The sequence spans 405 residues: Cysteine desulfurase IscS (405 aa).

Asn-156 contributes to the pyridoxal 5'-phosphate binding site. Lys-207 bears the N6-(pyridoxal phosphate)lysine mark. Residue Cys-329 is the Cysteine persulfide intermediate of the active site. Position 329 (Cys-329) interacts with [2Fe-2S] cluster.

This sequence belongs to the class-V pyridoxal-phosphate-dependent aminotransferase family. NifS/IscS subfamily. As to quaternary structure, homodimer. Forms a heterotetramer with IscU, interacts with other sulfur acceptors. Pyridoxal 5'-phosphate is required as a cofactor.

The protein resides in the cytoplasm. It carries out the reaction (sulfur carrier)-H + L-cysteine = (sulfur carrier)-SH + L-alanine. The protein operates within cofactor biosynthesis; iron-sulfur cluster biosynthesis. Master enzyme that delivers sulfur to a number of partners involved in Fe-S cluster assembly, tRNA modification or cofactor biosynthesis. Catalyzes the removal of elemental sulfur atoms from cysteine to produce alanine. Functions as a sulfur delivery protein for Fe-S cluster synthesis onto IscU, an Fe-S scaffold assembly protein, as well as other S acceptor proteins. The polypeptide is Cysteine desulfurase IscS (Dechloromonas aromatica (strain RCB)).